The primary structure comprises 181 residues: Ribulose bisphosphate carboxylase small subunit, chloroplastic 1 (181 aa).

The N-terminal 54 residues, Met1–Ser54, are a transit peptide targeting the chloroplast.

Belongs to the RuBisCO small chain family. In terms of assembly, heterohexadecamer of 8 large and 8 small subunits.

It is found in the plastid. It localises to the chloroplast. In terms of biological role, ruBisCO catalyzes two reactions: the carboxylation of D-ribulose 1,5-bisphosphate, the primary event in carbon dioxide fixation, as well as the oxidative fragmentation of the pentose substrate. Both reactions occur simultaneously and in competition at the same active site. Although the small subunit is not catalytic it is essential for maximal activity. The sequence is that of Ribulose bisphosphate carboxylase small subunit, chloroplastic 1 from Brassica napus (Rape).